A 79-amino-acid chain; its full sequence is Hematopoietic cell signal transducer (79 aa).

An N-terminal signal peptide occupies residues 1–18; the sequence is MAPPGHLLFLFLLPVAAS. Residues 19 to 35 lie on the Extracellular side of the membrane; the sequence is QTNEGSCSGCGPLSLPL. A helical membrane pass occupies residues 36 to 56; it reads LAGLVAADAVMSLLIVGVVFV. Topologically, residues 57-79 are cytoplasmic; the sequence is CMRLHSRPAQEDGRVYINMPGRG. A Phosphotyrosine modification is found at Tyr-72. The interval 72-74 is GRB2 binding site; that stretch reads YIN. Residues 72 to 75 form a PIK3R1 binding site region; that stretch reads YINM.

The protein belongs to the DAP10 family. In terms of assembly, homodimer; Disulfide-linked. Heterohexamer composed of four subunits of HCST/DAP10 and two subunits of KLRK1. Interacts (via transmembrane domain) with KLRK1 (via transmembrane domain); the interaction is required for KLRK1 NK cell surface and induces NK cell-mediated cytotoxicity. Interacts with PIK3R1 and GRB2. Interacts with CLEC5A. Forms an CLEC5A/TYROBP/HCST trimolecular complex depending almost solely on TYROBP. Interacts with CD300H. Phosphorylated; PIK3R1 and GRB2 associate specifically with tyrosine-phosphorylated HCST. Post-translationally, O-glycosylated.

It localises to the membrane. In terms of biological role, transmembrane adapter protein which associates with KLRK1 to form an activation receptor KLRK1-HCST in lymphoid and myeloid cells; this receptor plays a major role in triggering cytotoxicity against target cells expressing cell surface ligands such as MHC class I chain-related MICA and MICB, and UL16-binding proteins (ULBPs); these ligands are up-regulated by stress conditions and pathological state such as viral infection and tumor transformation. Functions as a docking site for PI3-kinase PIK3R1 and GRB2. Interaction of ULBPs with KLRK1-HCST triggers calcium mobilization and activation of the PIK3R1, MAP2K/ERK, and JAK2/STAT5 signaling pathways. Both PIK3R1 and GRB2 are required for full KLRK1-HCST-mediated activation and ultimate killing of target cells. In NK cells, KLRK1-HCST signaling directly induces cytotoxicity and enhances cytokine production initiated via DAP12/TYROBP-associated receptors. In T-cells, it provides primarily costimulation for TCR-induced signals. KLRK1-HCST receptor plays a role in immune surveillance against tumors and is required for cytolysis of tumors cells; indeed, melanoma cells that do not express KLRK1 ligands escape from immune surveillance mediated by NK cells. This chain is Hematopoietic cell signal transducer (Hcst), found in Rattus norvegicus (Rat).